We begin with the raw amino-acid sequence, 319 residues long: 33 kDa chaperonin (319 aa).

The segment covering 1 to 10 has biased composition (basic and acidic residues); sequence MTDASGSERL. A disordered region spans residues 1–25; the sequence is MTDASGSERLKRAKGISEGTPSSLP. 2 disulfides stabilise this stretch: Cys-261-Cys-263 and Cys-294-Cys-297.

Belongs to the HSP33 family. Under oxidizing conditions two disulfide bonds are formed involving the reactive cysteines. Under reducing conditions zinc is bound to the reactive cysteines and the protein is inactive.

The protein localises to the cytoplasm. Redox regulated molecular chaperone. Protects both thermally unfolding and oxidatively damaged proteins from irreversible aggregation. Plays an important role in the bacterial defense system toward oxidative stress. This Synechococcus sp. (strain JA-2-3B'a(2-13)) (Cyanobacteria bacterium Yellowstone B-Prime) protein is 33 kDa chaperonin.